Reading from the N-terminus, the 226-residue chain is UPF0758 protein Daci_1904 (226 aa).

Residues 104–226 enclose the MPN domain; that stretch reads ALASPEAVAR…SLSMAGQGML (123 aa). The Zn(2+) site is built by histidine 175, histidine 177, and aspartate 188. A JAMM motif motif is present at residues 175–188; sequence HNHPSGQVQASAAD.

The protein belongs to the UPF0758 family.

In Delftia acidovorans (strain DSM 14801 / SPH-1), this protein is UPF0758 protein Daci_1904.